A 901-amino-acid chain; its full sequence is METAPDEAPTEFLEPGEEIVENVIEEEVVHEEDVEHHEEDGEMIEVQHEEVLEEIVEEDGMMFDTDGRVIEYSDVMVYEEGTEVIEEYVEVEDLGDGRYAYVMTDDIGHRRLLKPHEVEAVKKMPGMMEEEVVMDDEKAPNTSYAAAQKRGRFPPQARSSLSPQKPRAAGAYMGPEAYYQQPKRMTHMAKVDVEKYSPVTPVNRRPLMDNAIFKSKLPRKSAPWQEETAANGGPQSTSLIRSPSPMLKEPLFDDNEIRFKCAECGDGFPVMDRLCDHMIKQHDCQTNVREVQFFADRDFENFLLKVEKATLGRDPEDAIRKKSRAGSSQLFVCNYMNKGRQKMAELVEVGIVGLSERPLEVCTAFVQKTHGYECIRVKYCDQHIHYDGNIGFRVPIAVKRRLFEMSFKRLPIPCMQIMLGLEAEQLLPHPTRFEEKLKNLSHVEIIELLQIINASLRKHQEVEPRGKKVPIKFETIKSSEGSQTLMVKRVTPPKKEHMDYDEPDPNIPSTSAQALGYNPDDDEGDDVPMMSREEEVLDDETGEESVMTEDCDGMMEDNMLYDPENNRDPLFDELTEVELGVLDAYEHDIEIALTEAQKKERTRLKAKFALNKVIGIYQTLDTATHGLTAGELHTDTINHLRDMASYVVELVCQIDAEVKVRRNPALRIDDVKRDMIAGIAMQERVHQPERRPRRSAAPASPAKPQYRPQPPARSHEEYTQRIMNKVKEYMPRRRPDAYDLQQGQQQSRLQMLREQTLLRAPLEEEKPPVATMAPVPDEHKAIPWTRPGRKRAMGPGEAATAPAKRRGRPTKKEEAAEAAAKLIQAENEMVVEEEEVEEPPVVEQEQVPKEKEVEVAEAEKLPEQVKTEPSVTPSSAPPTPATTATKTRTGRVVKPKKWDDN.

Disordered regions lie at residues 147–169 (AQKR…PRAA) and 218–245 (PRKS…SPSP). The segment at 259-282 (FKCAECGDGFPVMDRLCDHMIKQH) adopts a C2H2-type zinc-finger fold. Disordered stretches follow at residues 494 to 528 (KKEH…DDVP), 682 to 717 (QERV…SHEE), and 779 to 901 (HKAI…WDDN). Residues 817–828 (EAAAKLIQAENE) show a composition bias toward low complexity. Residues 829-840 (MVVEEEEVEEPP) show a composition bias toward acidic residues. The span at 846-866 (QVPKEKEVEVAEAEKLPEQVK) shows a compositional bias: basic and acidic residues.

Its function is as follows. Promotes programmed cell death. Its role in programmed cell death may be in conjunction with cell cycle regulatory factor efl-1 and the synthetic multivulva class B proteins dpl-1 and lin-35, and is independent of the ced-1, ced-8 and ced-9 pathways. The protein is Modifier of cell death of Caenorhabditis elegans.